We begin with the raw amino-acid sequence, 756 residues long: Anaphase-promoting complex subunit 5 (756 aa).

4 TPR repeats span residues 301-334 (RYAA…AQES), 522-555 (DGRY…KAQN), 581-614 (ISVL…SREY), and 678-711 (YSQQ…EQLR).

This sequence belongs to the APC5 family. As to quaternary structure, the APC/C is composed of at least 12 subunits.

The protein localises to the nucleus. Its subcellular location is the cytoplasm. It localises to the cytoskeleton. The protein resides in the spindle. Its pathway is protein modification; protein ubiquitination. In terms of biological role, component of the anaphase promoting complex/cyclosome (APC/C), a cell cycle-regulated E3 ubiquitin ligase that controls progression through mitosis and the G1 phase of the cell cycle. The APC/C complex acts by mediating ubiquitination and subsequent degradation of target proteins: it mainly mediates the formation of 'Lys-11'-linked polyubiquitin chains and, to a lower extent, the formation of 'Lys-48'- and 'Lys-63'-linked polyubiquitin chains. The APC/C complex catalyzes assembly of branched 'Lys-11'-/'Lys-48'-linked branched ubiquitin chains on target proteins. This chain is Anaphase-promoting complex subunit 5 (ANAPC5), found in Gallus gallus (Chicken).